The chain runs to 404 residues: Spore germination protein YndF (404 aa).

The signal sequence occupies residues 1-24 (MKSKLKRQLPAMVIVCLLMICVTG). Residue Cys25 is the site of N-palmitoyl cysteine attachment. The S-diacylglycerol cysteine moiety is linked to residue Cys25.

This sequence belongs to the GerABKC lipoprotein family.

It is found in the cell membrane. May be involved in spore germination. The polypeptide is Spore germination protein YndF (yndF) (Bacillus subtilis (strain 168)).